A 549-amino-acid chain; its full sequence is Cytoplasmic trehalase (549 aa).

Residues Arg168, 175–176 (WD), Asn212, 221–223 (RSQ), 292–294 (RDE), and Gly324 each bind substrate. Catalysis depends on proton donor/acceptor residues Asp326 and Glu509. A substrate-binding site is contributed by Glu525.

This sequence belongs to the glycosyl hydrolase 37 family. As to quaternary structure, monomer.

The protein localises to the cytoplasm. The catalysed reaction is alpha,alpha-trehalose + H2O = alpha-D-glucose + beta-D-glucose. It functions in the pathway glycan degradation; trehalose degradation; D-glucose from alpha,alpha-trehalose: step 1/1. Its function is as follows. Hydrolyzes trehalose to glucose. Could be involved, in cells returning to low osmolarity conditions, in the utilization of the accumulated cytoplasmic trehalose, which was synthesized in response to high osmolarity. This chain is Cytoplasmic trehalase, found in Salmonella choleraesuis (strain SC-B67).